The chain runs to 272 residues: MSRVGVMVLGPAGAGKSTFCNSIISHMQTVGRRAHIVNLDPAAEATKYEFTIDIRDLISLDDVMEEMDLGPNGALIYCFEYLLKNLDWLDEEIGDFNDEYLIFDCPGQIELYTHIPVLPNIVRHLTQQLNFNLCATYLLEAPFVIDSSKFFSGALSAMSAMILLELPHINVLSKLDLIKGDINKKKLKRFLNPDAMLLMETEGMNQASNPKFLRLNQCIANLVDDFGMVQFLPLESNNPDSIETILSYVDDITQWAEGQEQKEPNDQIDVEE.

13-18 (GAGKST) contacts GTP. The Gly-Pro-Asn (GPN)-loop; involved in dimer interface motif lies at 70–72 (GPN). 173–176 (SKLD) provides a ligand contact to GTP.

The protein belongs to the GPN-loop GTPase family. In terms of assembly, heterodimers with NPA3/GPN1 or GPN2. Binds to RNA polymerase II (RNAPII).

Small GTPase required for proper nuclear localization of RNA polymerase II and III (RNAPII and RNAPIII). May act at an RNAP assembly step prior to nuclear import. Promotes sister chromatid separation during anaphase. The polypeptide is GPN-loop GTPase 3 (Saccharomyces cerevisiae (strain ATCC 204508 / S288c) (Baker's yeast)).